Reading from the N-terminus, the 398-residue chain is Tyrosine--tRNA ligase (398 aa).

The 'HIGH' region motif lies at 42 to 51 (PTAPDIHLGH). Positions 226–230 (KMSKS) match the 'KMSKS' region motif. Position 229 (Lys-229) interacts with ATP. An S4 RNA-binding domain is found at 336-397 (LAIANLLKDA…GKRKFAKVTL (62 aa)).

The protein belongs to the class-I aminoacyl-tRNA synthetase family. TyrS type 2 subfamily. In terms of assembly, homodimer.

Its subcellular location is the cytoplasm. It carries out the reaction tRNA(Tyr) + L-tyrosine + ATP = L-tyrosyl-tRNA(Tyr) + AMP + diphosphate + H(+). In terms of biological role, catalyzes the attachment of tyrosine to tRNA(Tyr) in a two-step reaction: tyrosine is first activated by ATP to form Tyr-AMP and then transferred to the acceptor end of tRNA(Tyr). This Shewanella oneidensis (strain ATCC 700550 / JCM 31522 / CIP 106686 / LMG 19005 / NCIMB 14063 / MR-1) protein is Tyrosine--tRNA ligase.